Reading from the N-terminus, the 113-residue chain is UPF0102 protein Shal_4069 (113 aa).

Belongs to the UPF0102 family.

This Shewanella halifaxensis (strain HAW-EB4) protein is UPF0102 protein Shal_4069.